A 614-amino-acid chain; its full sequence is Phosphomethylpyrimidine synthase (614 aa).

Substrate is bound by residues asparagine 226, methionine 255, tyrosine 284, histidine 320, 340-342 (SRG), 381-384 (DGLR), and glutamate 420. Residue histidine 424 coordinates Zn(2+). Residue tyrosine 447 coordinates substrate. Residue histidine 488 participates in Zn(2+) binding. Positions 568, 571, and 576 each coordinate [4Fe-4S] cluster.

This sequence belongs to the ThiC family. Homodimer. [4Fe-4S] cluster is required as a cofactor.

The enzyme catalyses 5-amino-1-(5-phospho-beta-D-ribosyl)imidazole + S-adenosyl-L-methionine = 4-amino-2-methyl-5-(phosphooxymethyl)pyrimidine + CO + 5'-deoxyadenosine + formate + L-methionine + 3 H(+). It participates in cofactor biosynthesis; thiamine diphosphate biosynthesis. Catalyzes the synthesis of the hydroxymethylpyrimidine phosphate (HMP-P) moiety of thiamine from aminoimidazole ribotide (AIR) in a radical S-adenosyl-L-methionine (SAM)-dependent reaction. The sequence is that of Phosphomethylpyrimidine synthase from Acidovorax sp. (strain JS42).